The following is a 229-amino-acid chain: PKHD-type hydroxylase Nham_1514 (229 aa).

The 103-residue stretch at 78-180 folds into the Fe2OG dioxygenase domain; sequence QIFPPLFNRY…RVASFFWLQS (103 aa). Positions 98, 100, and 161 each coordinate Fe cation. Residue Arg171 participates in 2-oxoglutarate binding.

Fe(2+) is required as a cofactor. Requires L-ascorbate as cofactor.

The protein is PKHD-type hydroxylase Nham_1514 of Nitrobacter hamburgensis (strain DSM 10229 / NCIMB 13809 / X14).